The primary structure comprises 1203 residues: DNA-directed RNA polymerase subunit beta' (1203 aa).

Positions 60, 62, 75, and 78 each coordinate Zn(2+). Mg(2+)-binding residues include aspartate 449, aspartate 451, and aspartate 453. Zn(2+)-binding residues include cysteine 818, cysteine 892, cysteine 899, and cysteine 902. A disordered region spans residues 1180–1203 (RNLESGLDMPESAEESSEEETQTV). Acidic residues predominate over residues 1190–1203 (ESAEESSEEETQTV).

It belongs to the RNA polymerase beta' chain family. The RNAP catalytic core consists of 2 alpha, 1 beta, 1 beta' and 1 omega subunit. When a sigma factor is associated with the core the holoenzyme is formed, which can initiate transcription. It depends on Mg(2+) as a cofactor. Zn(2+) serves as cofactor.

The catalysed reaction is RNA(n) + a ribonucleoside 5'-triphosphate = RNA(n+1) + diphosphate. DNA-dependent RNA polymerase catalyzes the transcription of DNA into RNA using the four ribonucleoside triphosphates as substrates. This is DNA-directed RNA polymerase subunit beta' from Oceanobacillus iheyensis (strain DSM 14371 / CIP 107618 / JCM 11309 / KCTC 3954 / HTE831).